A 487-amino-acid chain; its full sequence is Zinc finger protein 345 (487 aa).

15 C2H2-type zinc fingers span residues 62–84 (LECKECGKDFSFVSVLIRHQRIH), 90–112 (YECKECGKAFGSGANLAYHQRIH), 118–140 (YECNECGKAFGSGSNLTHHQRIH), 146–168 (YECKECGKAFSFGSGLIRHQIIH), 174–196 (YECKVCGKSFSFESALTRHHRIH), 202–224 (YECKDCGKAFGSGSNLTQHRRVH), 230–252 (YECKGCGMAFSSGSALTRHQRIH), 258–280 (YICNECGKAFSFGSALTRHQRIH), 286–308 (YVCKECGKAFNSGSDLTQHQRIH), 314–336 (YECKECEKAFRSGSKLIQHQRMH), 342–364 (YECKECGKAFSSGSDLTQHQRIH), 370–392 (YECKECGKAFASGSKLIQHQLIH), 398–420 (YECRECRKSFSSGSALNRHQRIH), 426–448 (YECKECEKTFGTGSTLTQHQRMH), and 454–476 (YECKACGKALGRGSEIQQHKKNH).

Belongs to the krueppel C2H2-type zinc-finger protein family.

It is found in the nucleus. May be involved in transcriptional regulation. This is Zinc finger protein 345 (ZNF345) from Bos taurus (Bovine).